Reading from the N-terminus, the 462-residue chain is GTPase HflX (462 aa).

Positions 255–452 (PAVGIVGYTN…LLEEKIYNLP (198 aa)) constitute a Hflx-type G domain. Residues 261–268 (GYTNAGKS), 286–290 (FATLD), 308–311 (DTVG), 374–377 (NKID), and 430–432 (SAY) each bind GTP. Mg(2+) contacts are provided by serine 268 and threonine 288.

This sequence belongs to the TRAFAC class OBG-HflX-like GTPase superfamily. HflX GTPase family. In terms of assembly, monomer. Associates with the 50S ribosomal subunit. Requires Mg(2+) as cofactor.

Its subcellular location is the cytoplasm. In terms of biological role, GTPase that associates with the 50S ribosomal subunit and may have a role during protein synthesis or ribosome biogenesis. This chain is GTPase HflX, found in Leptospira borgpetersenii serovar Hardjo-bovis (strain JB197).